The sequence spans 196 residues: ATP-dependent Clp protease proteolytic subunit (196 aa).

S101 acts as the Nucleophile in catalysis. Residue H126 is part of the active site.

This sequence belongs to the peptidase S14 family. As to quaternary structure, component of the chloroplastic Clp protease core complex.

It is found in the plastid. The protein resides in the chloroplast stroma. The enzyme catalyses Hydrolysis of proteins to small peptides in the presence of ATP and magnesium. alpha-casein is the usual test substrate. In the absence of ATP, only oligopeptides shorter than five residues are hydrolyzed (such as succinyl-Leu-Tyr-|-NHMec, and Leu-Tyr-Leu-|-Tyr-Trp, in which cleavage of the -Tyr-|-Leu- and -Tyr-|-Trp bonds also occurs).. In terms of biological role, cleaves peptides in various proteins in a process that requires ATP hydrolysis. Has a chymotrypsin-like activity. Plays a major role in the degradation of misfolded proteins. In Citrus sinensis (Sweet orange), this protein is ATP-dependent Clp protease proteolytic subunit.